Reading from the N-terminus, the 458-residue chain is MDRRIYGGSAVIHLFLFFSVLIFSAASALSKNQSPSSGSGQINSNSVLVALLDSRYTELAELVEKALLLQTLEDAVGRHNITIFAPRNEALERDLDPEFKRFLLEPGNLKSLQTLLMFHIIPNRVGSNQWPSEESGRVKHHTLGNDQVRLSNGQGKKMVDLAEIIRPDDLTRPDGLIHGIERLLIPRSVQEDFNRRRSLQSISAVLPEGAPEVDPRTNRLKKPAAPVPAGSPPALPIQSAMAPGPSLAPAPAPGPGGKQHHFDGEAQVKDFIHTLLHYGGYNEMADILVNLTSLATEMGRLVSEGYVLTVLAPNDEAMAKLTTDQLSEPGAPEQIVYYHIIPEYQTEESMYNSVRRFGKVKFDTLRFPHKVAAKEADGSVKFGDGEKSAYLFDPDIYTDGRISVQGIDGVLFPQEEEVVESVKKPVKKIVQPRRGKLLEVACSMLGAFGKDTYLSKCR.

Residues 1-30 (MDRRIYGGSAVIHLFLFFSVLIFSAASALS) form the signal peptide. The FAS1 1 domain occupies 43–184 (NSNSVLVALL…GLIHGIERLL (142 aa)). Asn-80 carries N-linked (GlcNAc...) asparagine glycosylation. Positions 207-262 (PEGAPEVDPRTNRLKKPAAPVPAGSPPALPIQSAMAPGPSLAPAPAPGPGGKQHHF) are disordered. The span at 225-235 (APVPAGSPPAL) shows a compositional bias: pro residues. The region spanning 268 to 411 (VKDFIHTLLH…ISVQGIDGVL (144 aa)) is the FAS1 2 domain. Asn-290 carries an N-linked (GlcNAc...) asparagine glycan.

This sequence belongs to the fasciclin-like AGP family.

The protein localises to the secreted. Functionally, may be a cell surface adhesion protein. This is Fasciclin-like arabinogalactan protein 17 (FLA17) from Arabidopsis thaliana (Mouse-ear cress).